We begin with the raw amino-acid sequence, 254 residues long: Gamma-glutamyl-gamma-aminobutyrate hydrolase (254 aa).

Residues 16 to 250 (RNRLKGHATQ…ITAWQHHIAE (235 aa)) enclose the Glutamine amidotransferase type-1 domain. C114 (nucleophile) is an active-site residue. Catalysis depends on residues H222 and E224.

Belongs to the peptidase C26 family.

It catalyses the reaction 4-(gamma-L-glutamylamino)butanoate + H2O = 4-aminobutanoate + L-glutamate. The protein operates within amine and polyamine degradation; putrescine degradation; 4-aminobutanoate from putrescine: step 4/4. In terms of biological role, involved in the breakdown of putrescine via hydrolysis of the gamma-glutamyl linkage of gamma-glutamyl-gamma-aminobutyrate. In Shigella flexneri, this protein is Gamma-glutamyl-gamma-aminobutyrate hydrolase (puuD).